The sequence spans 309 residues: Ribonuclease Z (309 aa).

Zn(2+) is bound by residues His63, His65, Asp67, His68, His145, Asp216, and His274. Residue Asp67 is the Proton acceptor of the active site.

Belongs to the RNase Z family. Homodimer. Requires Zn(2+) as cofactor.

The catalysed reaction is Endonucleolytic cleavage of RNA, removing extra 3' nucleotides from tRNA precursor, generating 3' termini of tRNAs. A 3'-hydroxy group is left at the tRNA terminus and a 5'-phosphoryl group is left at the trailer molecule.. Functionally, zinc phosphodiesterase, which displays some tRNA 3'-processing endonuclease activity. Probably involved in tRNA maturation, by removing a 3'-trailer from precursor tRNA. The polypeptide is Ribonuclease Z (Streptococcus sanguinis (strain SK36)).